Reading from the N-terminus, the 134-residue chain is Profilin-3 (134 aa).

The cysteines at positions 13 and 118 are disulfide-linked. Residues 84–100 (AVIRGKKGSGGITIKKT) carry the Involved in PIP2 interaction motif. The residue at position 114 (threonine 114) is a Phosphothreonine.

The protein belongs to the profilin family. In terms of assembly, occurs in many kinds of cells as a complex with monomeric actin in a 1:1 ratio. Phosphorylated by MAP kinases.

It localises to the cytoplasm. The protein localises to the cytoskeleton. Binds to actin and affects the structure of the cytoskeleton. At high concentrations, profilin prevents the polymerization of actin, whereas it enhances it at low concentrations. The polypeptide is Profilin-3 (Olea europaea (Common olive)).